The sequence spans 163 residues: ATP synthase subunit b (163 aa).

The helical transmembrane segment at 10–29 (VFMQMFHFLLMLVVLRLFAY) threads the bilayer.

This sequence belongs to the ATPase B chain family. As to quaternary structure, F-type ATPases have 2 components, F(1) - the catalytic core - and F(0) - the membrane proton channel. F(1) has five subunits: alpha(3), beta(3), gamma(1), delta(1), epsilon(1). F(0) has three main subunits: a(1), b(2) and c(10-14). The alpha and beta chains form an alternating ring which encloses part of the gamma chain. F(1) is attached to F(0) by a central stalk formed by the gamma and epsilon chains, while a peripheral stalk is formed by the delta and b chains.

The protein resides in the cell membrane. In terms of biological role, f(1)F(0) ATP synthase produces ATP from ADP in the presence of a proton or sodium gradient. F-type ATPases consist of two structural domains, F(1) containing the extramembraneous catalytic core and F(0) containing the membrane proton channel, linked together by a central stalk and a peripheral stalk. During catalysis, ATP synthesis in the catalytic domain of F(1) is coupled via a rotary mechanism of the central stalk subunits to proton translocation. Functionally, component of the F(0) channel, it forms part of the peripheral stalk, linking F(1) to F(0). The protein is ATP synthase subunit b of Desulforudis audaxviator (strain MP104C).